The sequence spans 476 residues: Adenylosuccinate synthetase, chloroplastic (476 aa).

The span at 1–20 shows a compositional bias: low complexity; sequence AAAAAGRGRSFSPAAPAPSS. The segment at 1–34 is disordered; that stretch reads AAAAAGRGRSFSPAAPAPSSVRLPGRQAPAPAAA. GTP-binding positions include 63–69 and 91–93; these read GDEGKGK and GHT. Aspartate 64 serves as the catalytic Proton acceptor. Mg(2+)-binding residues include aspartate 64 and glycine 91. IMP-binding positions include 64–67, 89–92, threonine 181, arginine 195, glutamine 275, threonine 290, and arginine 354; these read DEGK and NAGH. The Proton donor role is filled by histidine 92. Residue 350-356 participates in substrate binding; sequence TTTGRPR. GTP contacts are provided by residues arginine 356, 382 to 384, and 465 to 467; these read KLD and GVG.

The protein belongs to the adenylosuccinate synthetase family. As to quaternary structure, homodimer. Requires Mg(2+) as cofactor.

It localises to the plastid. The protein resides in the chloroplast. The catalysed reaction is IMP + L-aspartate + GTP = N(6)-(1,2-dicarboxyethyl)-AMP + GDP + phosphate + 2 H(+). It functions in the pathway purine metabolism; AMP biosynthesis via de novo pathway; AMP from IMP: step 1/2. Functionally, plays an important role in the de novo pathway and in the salvage pathway of purine nucleotide biosynthesis. Catalyzes the first committed step in the biosynthesis of AMP from IMP. This chain is Adenylosuccinate synthetase, chloroplastic, found in Triticum aestivum (Wheat).